Reading from the N-terminus, the 172-residue chain is Ribosome maturation factor RimM (172 aa).

The PRC barrel domain occupies 94-167; that stretch reads EGSYYYKDII…VAHVIVPEGL (74 aa).

It belongs to the RimM family. In terms of assembly, binds ribosomal protein uS19.

The protein resides in the cytoplasm. Functionally, an accessory protein needed during the final step in the assembly of 30S ribosomal subunit, possibly for assembly of the head region. Essential for efficient processing of 16S rRNA. May be needed both before and after RbfA during the maturation of 16S rRNA. It has affinity for free ribosomal 30S subunits but not for 70S ribosomes. The protein is Ribosome maturation factor RimM of Lacticaseibacillus paracasei (strain ATCC 334 / BCRC 17002 / CCUG 31169 / CIP 107868 / KCTC 3260 / NRRL B-441) (Lactobacillus paracasei).